Reading from the N-terminus, the 396-residue chain is S-adenosylmethionine synthase (396 aa).

Residue H15 participates in ATP binding. D17 provides a ligand contact to Mg(2+). E43 provides a ligand contact to K(+). L-methionine-binding residues include E56 and Q99. The flexible loop stretch occupies residues 99–109 (QSSDIAMGVDK). ATP contacts are provided by residues 175–177 (DGK), 241–242 (RF), D250, 256–257 (RK), A273, and K277. D250 serves as a coordination point for L-methionine. An L-methionine-binding site is contributed by K281.

This sequence belongs to the AdoMet synthase family. In terms of assembly, homotetramer; dimer of dimers. The cofactor is Mg(2+). K(+) is required as a cofactor.

The protein resides in the cytoplasm. It carries out the reaction L-methionine + ATP + H2O = S-adenosyl-L-methionine + phosphate + diphosphate. The protein operates within amino-acid biosynthesis; S-adenosyl-L-methionine biosynthesis; S-adenosyl-L-methionine from L-methionine: step 1/1. Functionally, catalyzes the formation of S-adenosylmethionine (AdoMet) from methionine and ATP. The overall synthetic reaction is composed of two sequential steps, AdoMet formation and the subsequent tripolyphosphate hydrolysis which occurs prior to release of AdoMet from the enzyme. The chain is S-adenosylmethionine synthase from Ruminiclostridium cellulolyticum (strain ATCC 35319 / DSM 5812 / JCM 6584 / H10) (Clostridium cellulolyticum).